A 243-amino-acid chain; its full sequence is Leucinostatins biosynthesis cluster protein S (243 aa).

Functionally, part of the gene cluster that mediates the biosynthesis of the lipopeptide antibiotics leucinostatins that show extensive biological activities, including antimalarial, antiviral, antibacterial, antifungal, and antitumor activities, as well as phytotoxic. The function of lcsS within the leucinostatins biosynthesis has not been identified yet. This is Leucinostatins biosynthesis cluster protein S from Purpureocillium lilacinum (Paecilomyces lilacinus).